A 96-amino-acid chain; its full sequence is Non-specific lipid-transfer protein 2G (96 aa).

A signal peptide spans 1–29; the sequence is MAGMMKKQVVTALMLALVVLAAAPGGARA. 4 cysteine pairs are disulfide-bonded: C31-C63, C39-C53, C54-C89, and C65-C96.

It is found in the secreted. It localises to the cell wall. Its function is as follows. Transfer lipids across membranes. May play a role in plant defense or in the biosynthesis of cuticle layers. The protein is Non-specific lipid-transfer protein 2G of Triticum aestivum (Wheat).